Consider the following 420-residue polypeptide: Glycogen synthase kinase-3 beta (420 aa).

The segment covering methionine 1–glycine 24 has biased composition (polar residues). Residues methionine 1 to arginine 50 form a disordered region. The Protein kinase domain occupies tyrosine 56–phenylalanine 340. ATP contacts are provided by residues isoleucine 62–valine 70 and lysine 85. The active-site Proton acceptor is aspartate 181. The interval asparagine 384–serine 420 is disordered. 2 stretches are compositionally biased toward low complexity: residues serine 389–asparagine 401 and asparagine 409–serine 420.

The protein belongs to the protein kinase superfamily. CMGC Ser/Thr protein kinase family. GSK-3 subfamily. In terms of processing, phosphorylated. Activated by phosphorylation at Tyr-216.

The protein resides in the cytoplasm. It localises to the nucleus. Its subcellular location is the cell membrane. The enzyme catalyses L-seryl-[tau protein] + ATP = O-phospho-L-seryl-[tau protein] + ADP + H(+). It carries out the reaction L-threonyl-[tau protein] + ATP = O-phospho-L-threonyl-[tau protein] + ADP + H(+). Plays a role in the organization of the formation of the main body axis of developing embryo. Acts as an inhibitor of differentiation of primary neurons. Inhibits the ability of ectopically expressed NEUROD1 and other bHLH factors to promote early retinal cell differentiation. May participate in the Wnt signaling pathway. May regulate the circadian clock via phosphorylation of the major clock components. This chain is Glycogen synthase kinase-3 beta (gsk3b), found in Xenopus laevis (African clawed frog).